An 86-amino-acid chain; its full sequence is MKASMFLALTGLALLFVVCYASESEEKEFSNELLSSVLAVDDNSKGEERECLGFGKGCNPSNDQCCKSSNLVCSRKHRWCKYEIGK.

Positions 1-21 are cleaved as a signal peptide; sequence MKASMFLALTGLALLFVVCYA. Positions 22–49 are excised as a propeptide; sequence SESEEKEFSNELLSSVLAVDDNSKGEER. 3 cysteine pairs are disulfide-bonded: Cys51–Cys66, Cys58–Cys73, and Cys65–Cys80. Ile84 carries the isoleucine amide modification.

This sequence belongs to the neurotoxin 10 (Hwtx-1) family. 22 (Htx-4) subfamily. As to quaternary structure, monomer. In terms of tissue distribution, expressed by the venom gland.

The protein resides in the secreted. Neurotoxin. Selectively blocks neuronal tetrodotoxin-sensitive voltage-gated sodium channels (Nav) with an IC(50) of 44.6 nM. Does not affect tetrodotoxin-resistant voltage-gated sodium channels or calcium channels. This chain is Mu-theraphotoxin-Hhn1b 3, found in Cyriopagopus hainanus (Chinese bird spider).